The following is a 298-amino-acid chain: Small ribosomal subunit protein uS2 (298 aa).

It belongs to the universal ribosomal protein uS2 family.

The protein is Small ribosomal subunit protein uS2 of Leifsonia xyli subsp. xyli (strain CTCB07).